The sequence spans 468 residues: 6-phospho-beta-galactosidase (468 aa).

Positions 19, 116, 159, 160, and 297 each coordinate D-galactose 6-phosphate. Glu-160 serves as the catalytic Proton donor. The Nucleophile role is filled by Glu-375. Residues Ser-428, Trp-429, Lys-435, and Tyr-437 each coordinate D-galactose 6-phosphate.

The protein belongs to the glycosyl hydrolase 1 family.

It catalyses the reaction a 6-phospho-beta-D-galactoside + H2O = D-galactose 6-phosphate + an alcohol. Its pathway is carbohydrate metabolism; lactose degradation; D-galactose 6-phosphate and beta-D-glucose from lactose 6-phosphate: step 1/1. This is 6-phospho-beta-galactosidase from Streptococcus sanguinis (strain SK36).